A 101-amino-acid polypeptide reads, in one-letter code: Gene 30 protein (101 aa).

The sequence is that of Gene 30 protein (30) from Mycobacterium phage L5 (Mycobacteriophage L5).